A 449-amino-acid chain; its full sequence is UDP-N-acetylmuramoylalanine--D-glutamate ligase (449 aa).

116-122 (GSNGKST) contacts ATP.

It belongs to the MurCDEF family.

The protein resides in the cytoplasm. It carries out the reaction UDP-N-acetyl-alpha-D-muramoyl-L-alanine + D-glutamate + ATP = UDP-N-acetyl-alpha-D-muramoyl-L-alanyl-D-glutamate + ADP + phosphate + H(+). The protein operates within cell wall biogenesis; peptidoglycan biosynthesis. In terms of biological role, cell wall formation. Catalyzes the addition of glutamate to the nucleotide precursor UDP-N-acetylmuramoyl-L-alanine (UMA). In Shewanella violacea (strain JCM 10179 / CIP 106290 / LMG 19151 / DSS12), this protein is UDP-N-acetylmuramoylalanine--D-glutamate ligase.